The primary structure comprises 868 residues: MHELYQPREIEAAAQTFWDEQKSFEVSEQPGKDTFYCLSMFPYPSGKLHMGHVRNYTIGDVISRYQRMLGKNVLQPLGWDAFGMPAENAAIDNNVAPAKWTYENIDYMKTQLKSLGLAVDWSREVTTCKPDYYRWEQWLFTRLFEKGVIYRKNGTVNWDPIDQTVLANEQVIDGRGWRSGALIEKREIPMYYFKITAYADELLESLDELPGWPEQVKTMQRNWIGRSRGMEVQFPYDQASIGEAGALKVFTTRPDTLMGATYVAVAAEHPLATLAAQGNPALQAFIDECKGGSVAEADVATQEKKGQATSLFVEHPLTGEKLPVWVANYVLMHYGDGAVMAVPAHDERDFEFATQYGLPIKPVVRTSAGDQTPAPWQPAYGEHGELINSGEFTGLTFQDAFDAIEAALVKKSLGQSRTQFRLRDWGISRQRYWGCPIPIVHCDTCGDVPVPEDQLPVVLPEDVVPDGAGSPLARMPEFYECSCPKCGAPAKRETDTMDTFVESSWYYARYASPHYEGGLVEPNAANHWLPVDQYIGGIEHAILHLLYARFFHKLMRDEGLVTSNEPFKNLLTQGMVNAETYFRMETSGKKTWINPADVTLERDAKAKVISARLTSDGLPVEIGGTEKMSKSKKNGIDPQTMIDQYGADTCRLFMMFASPPDMSLEWSDSGVEGSHRFLRRVWRLAQAHVTQGPSTGLDVAALSDEQKAIRRAIHQAIRQASQDIGQNQKFNTAVAQVMTLMNVLEKAPQDTPQDRALMQEGVETVALLLAPITPHISHELWKQLGHNEPVIDAGWPAFDASALVQDSLQLVIQVNGKLRGHIEMPASASREEVEAAARVNENVLRFTDGLTIRKVIVVPGKLVNIVAS.

The 'HIGH' region signature appears at 42–52 (PYPSGKLHMGH). The 'KMSKS' region motif lies at 627–631 (KMSKS). Lys-630 provides a ligand contact to ATP.

The protein belongs to the class-I aminoacyl-tRNA synthetase family.

It localises to the cytoplasm. It carries out the reaction tRNA(Leu) + L-leucine + ATP = L-leucyl-tRNA(Leu) + AMP + diphosphate. This Pseudomonas syringae pv. syringae (strain B728a) protein is Leucine--tRNA ligase.